The sequence spans 1384 residues: RRP12-like protein (1384 aa).

The span at 1-13 (MGKFRSKLKRNGK) shows a compositional bias: basic residues. Residues 1–32 (MGKFRSKLKRNGKGKTWSRGESATSNPTQMKH) are disordered. The segment covering 19 to 29 (RGESATSNPTQ) has biased composition (polar residues). S82, S85, S96, S1094, S1095, S1117, and S1119 each carry phosphoserine. 3 disordered regions span residues 1082–1102 (LRKK…LVSG), 1114–1155 (LADS…IRED), and 1176–1384 (SAQT…KKYK). Acidic residues-rich tracts occupy residues 1090–1099 (AQEDSSDDEL) and 1114–1127 (LADS…DMDA). The segment covering 1176–1191 (SAQTATPAQSQKTKAQ) has biased composition (polar residues). 6 positions are modified to phosphoserine: S1221, S1225, S1227, S1230, S1250, and S1251. Composition is skewed to polar residues over residues 1276–1285 (SGKTTASSRY) and 1297–1315 (TAGN…TSRP). A compositionally biased stretch (basic and acidic residues) spans 1321 to 1334 (GSKKAKGDMKKSGK). Residues 1348–1362 (LNKRKRSMNSRKFKS) are compositionally biased toward basic residues. A compositionally biased stretch (gly residues) spans 1369 to 1378 (AENGGAGGGR).

It belongs to the RRP12 family.

It is found in the nucleus. The polypeptide is RRP12-like protein (Drosophila melanogaster (Fruit fly)).